Reading from the N-terminus, the 660-residue chain is tRNA 5-methylaminomethyl-2-thiouridine biosynthesis bifunctional protein MnmC (660 aa).

Residues 1 to 235 are tRNA (mnm(5)s(2)U34)-methyltransferase; it reads MTITRHARID…KWEVLRGAFI (235 aa). Residues 266–660 form an FAD-dependent cmnm(5)s(2)U34 oxidoreductase region; the sequence is IGAGLAGCAT…LRGLIRGGGK (395 aa).

It in the N-terminal section; belongs to the methyltransferase superfamily. tRNA (mnm(5)s(2)U34)-methyltransferase family. This sequence in the C-terminal section; belongs to the DAO family. Requires FAD as cofactor.

It localises to the cytoplasm. It carries out the reaction 5-aminomethyl-2-thiouridine(34) in tRNA + S-adenosyl-L-methionine = 5-methylaminomethyl-2-thiouridine(34) in tRNA + S-adenosyl-L-homocysteine + H(+). Catalyzes the last two steps in the biosynthesis of 5-methylaminomethyl-2-thiouridine (mnm(5)s(2)U) at the wobble position (U34) in tRNA. Catalyzes the FAD-dependent demodification of cmnm(5)s(2)U34 to nm(5)s(2)U34, followed by the transfer of a methyl group from S-adenosyl-L-methionine to nm(5)s(2)U34, to form mnm(5)s(2)U34. This is tRNA 5-methylaminomethyl-2-thiouridine biosynthesis bifunctional protein MnmC from Pseudomonas syringae pv. tomato (strain ATCC BAA-871 / DC3000).